The following is a 116-amino-acid chain: Large ribosomal subunit protein bL20 (116 aa).

This sequence belongs to the bacterial ribosomal protein bL20 family.

In terms of biological role, binds directly to 23S ribosomal RNA and is necessary for the in vitro assembly process of the 50S ribosomal subunit. It is not involved in the protein synthesizing functions of that subunit. This Mycoplasmopsis pulmonis (strain UAB CTIP) (Mycoplasma pulmonis) protein is Large ribosomal subunit protein bL20.